The primary structure comprises 323 residues: DNA repair and recombination protein RadA (323 aa).

114–121 is an ATP binding site; it reads GEFGSGKT.

Belongs to the eukaryotic RecA-like protein family.

Its function is as follows. Involved in DNA repair and in homologous recombination. Binds and assemble on single-stranded DNA to form a nucleoprotein filament. Hydrolyzes ATP in a ssDNA-dependent manner and promotes DNA strand exchange between homologous DNA molecules. This chain is DNA repair and recombination protein RadA, found in Picrophilus torridus (strain ATCC 700027 / DSM 9790 / JCM 10055 / NBRC 100828 / KAW 2/3).